A 332-amino-acid chain; its full sequence is Zinc finger protein CONSTANS-LIKE 13 (332 aa).

Zn(2+) is bound by residues Cys-13, Cys-16, Cys-36, His-41, Cys-56, Cys-59, Cys-79, and His-84. A B box-type 1; atypical zinc finger spans residues 13–55 (CDYCDSSVALVYCKADSAKLCLACDKQVHVANQLFAKHFRSLL). The segment at 56 to 96 (CDSCNESPSSLFCETERSVLCQNCDWQHHTASSSLHSRRPF) adopts a B box-type 2; atypical zinc-finger fold. Residues 287 to 329 (RNSALSRYKEKKKSRRYEKHIRYESRKVRAESRTRIRGRFAKA) form the CCT domain.

This sequence belongs to the CONSTANS family.

Its subcellular location is the nucleus. The polypeptide is Zinc finger protein CONSTANS-LIKE 13 (COL13) (Arabidopsis thaliana (Mouse-ear cress)).